A 240-amino-acid polypeptide reads, in one-letter code: Biosynthetic peptidoglycan transglycosylase (240 aa).

The chain crosses the membrane as a helical span at residues 9–31; that stretch reads FLNVVKWFAIASVLLVLLFRVVP.

This sequence belongs to the glycosyltransferase 51 family.

It localises to the cell inner membrane. The enzyme catalyses [GlcNAc-(1-&gt;4)-Mur2Ac(oyl-L-Ala-gamma-D-Glu-L-Lys-D-Ala-D-Ala)](n)-di-trans,octa-cis-undecaprenyl diphosphate + beta-D-GlcNAc-(1-&gt;4)-Mur2Ac(oyl-L-Ala-gamma-D-Glu-L-Lys-D-Ala-D-Ala)-di-trans,octa-cis-undecaprenyl diphosphate = [GlcNAc-(1-&gt;4)-Mur2Ac(oyl-L-Ala-gamma-D-Glu-L-Lys-D-Ala-D-Ala)](n+1)-di-trans,octa-cis-undecaprenyl diphosphate + di-trans,octa-cis-undecaprenyl diphosphate + H(+). It participates in cell wall biogenesis; peptidoglycan biosynthesis. Peptidoglycan polymerase that catalyzes glycan chain elongation from lipid-linked precursors. In Pseudomonas fluorescens (strain SBW25), this protein is Biosynthetic peptidoglycan transglycosylase.